The following is a 359-amino-acid chain: DNA replication and repair protein RecF (359 aa).

30-37 (GPNGSGKT) is a binding site for ATP.

Belongs to the RecF family.

It localises to the cytoplasm. In terms of biological role, the RecF protein is involved in DNA metabolism; it is required for DNA replication and normal SOS inducibility. RecF binds preferentially to single-stranded, linear DNA. It also seems to bind ATP. The chain is DNA replication and repair protein RecF from Vibrio parahaemolyticus serotype O3:K6 (strain RIMD 2210633).